The chain runs to 210 residues: Inner membrane-spanning protein YciB (210 aa).

6 helical membrane-spanning segments follow: residues 12-32, 53-73, 78-98, 115-135, 148-168, and 175-195; these read EVSP…FFFA, IFIA…ASWI, LPMM…LTLW, LFGA…GYVF, KLTI…EVIW, and FWVA…TLAQ.

It belongs to the YciB family.

It is found in the cell inner membrane. In terms of biological role, plays a role in cell envelope biogenesis, maintenance of cell envelope integrity and membrane homeostasis. The protein is Inner membrane-spanning protein YciB of Rhizobium meliloti (strain 1021) (Ensifer meliloti).